A 750-amino-acid polypeptide reads, in one-letter code: DDT domain-containing protein DDR4 (750 aa).

A disordered region spans residues 1–125 (MGSSSDIVPD…ITSLVPPPEP (125 aa)). Low complexity predominate over residues 45–54 (RAQQRLQELQ). The span at 55 to 77 (AAERKLKPPKKEYKREQHRRREE) shows a compositional bias: basic and acidic residues. Residues 78 to 100 (VVEEDEDSEDDDQEDEENDGDDE) show a composition bias toward acidic residues. One can recognise a DDT domain in the interval 133 to 192 (LRSMWELASVLNFLHVFRPLLKINAEFSAEEFETALLTPNDTLSDIHIPLLKAIPPVTRM). 2 disordered regions span residues 450-505 (NGRS…TDFV) and 532-750 (LKKR…TDNS). The span at 451 to 471 (GRSTSSTHPTEPVNDTASGRS) shows a compositional bias: polar residues. Positions 545–585 (EGDEEKGDEEYKWDEDNAEYEEEEEEEEEEDSLSASEEDSD) are enriched in acidic residues. The segment covering 595-606 (RRETKLRSRSND) has biased composition (basic and acidic residues). The span at 688-707 (NADTTNGKENNQLNKSNGTT) shows a compositional bias: polar residues. The segment covering 741-750 (LKDDDKTDNS) has biased composition (basic and acidic residues).

In terms of assembly, interacts (via the DDT domain) with CHR11 (via C-terminus).

It is found in the nucleus. Probable transcription regulator. In Arabidopsis thaliana (Mouse-ear cress), this protein is DDT domain-containing protein DDR4.